Reading from the N-terminus, the 312-residue chain is Small ribosomal subunit protein RACK1 (312 aa).

WD repeat units lie at residues 9-42, 63-93, 105-135, 148-180, 192-222, 233-262, and 279-307; these read GHRG…ISWK, GHTG…RMWD, KHTK…RVWN, GHED…KVWN, GHSN…LLWD, NVES…SVYD, and PSEC…RVWS.

It belongs to the WD repeat G protein beta family. Ribosomal protein RACK1 subfamily.

This chain is Small ribosomal subunit protein RACK1, found in Leishmania major.